Here is an 81-residue protein sequence, read N- to C-terminus: Cytotoxin 4a (81 aa).

Positions 1–21 (MKTLLLTLVVVTIVCLDLGYT) are cleaved as a signal peptide. Disulfide bonds link Cys24/Cys42, Cys35/Cys59, Cys63/Cys74, and Cys75/Cys80.

It belongs to the three-finger toxin family. Short-chain subfamily. Type IA cytotoxin sub-subfamily. As to quaternary structure, monomer in solution; Homodimer and oligomer in the presence of negatively charged lipids forming a pore with a size ranging between 20 and 30 Angstroms. Expressed by the venom gland.

The protein localises to the secreted. It is found in the target cell membrane. In terms of biological role, shows cytolytic activity on many different cells by forming pore in lipid membranes. In vivo, increases heart rate or kills the animal by cardiac arrest. In addition, it binds to heparin with high affinity, interacts with Kv channel-interacting protein 1 (KCNIP1) in a calcium-independent manner, and binds to integrin alpha-V/beta-3 (ITGAV/ITGB3) with moderate affinity. In Naja sputatrix (Malayan spitting cobra), this protein is Cytotoxin 4a.